A 617-amino-acid polypeptide reads, in one-letter code: Zinc finger protein 221 (617 aa).

Positions 30–100 constitute a KRAB domain; it reads VTFKDVAVVF…KTTSQREGNS (71 aa). C2H2-type zinc fingers lie at residues 170-192, 198-220, and 226-248; these read YRCN…QQSH, HTCG…QRVH, and YKCD…QRVH. Residues 254 to 276 form a C2H2-type 4; degenerate zinc finger; the sequence is FKCGQCGKGFHSRSALNVHCKLH. 11 consecutive C2H2-type zinc fingers follow at residues 282–304, 310–332, 338–360, 366–388, 394–416, 422–444, 450–472, 478–500, 506–528, 534–556, and 562–584; these read YNCE…QRIH, FKCD…SMVH, FRCD…SMVH, YKCE…QMVH, YNCK…QQVH, FKCE…QRSH, YNCE…QRVH, YNCK…QRLH, FKCE…QTCH, and YKCE…QRVH.

It belongs to the krueppel C2H2-type zinc-finger protein family.

The protein localises to the nucleus. Its function is as follows. May be involved in transcriptional regulation. In Homo sapiens (Human), this protein is Zinc finger protein 221 (ZNF221).